The primary structure comprises 305 residues: Putative S-adenosyl-L-methionine-dependent methyltransferase MAB_3787 (305 aa).

S-adenosyl-L-methionine is bound by residues Asp-132 and 161-162; that span reads DL.

This sequence belongs to the UPF0677 family.

Exhibits S-adenosyl-L-methionine-dependent methyltransferase activity. The chain is Putative S-adenosyl-L-methionine-dependent methyltransferase MAB_3787 from Mycobacteroides abscessus (strain ATCC 19977 / DSM 44196 / CCUG 20993 / CIP 104536 / JCM 13569 / NCTC 13031 / TMC 1543 / L948) (Mycobacterium abscessus).